The chain runs to 700 residues: Sex comb on midleg-like protein 2 (700 aa).

Positions 1–33 are disordered; that stretch reads MGQTVNEDSMDVKKENQEKTPQSSTSSVQRDDF. Over residues 19–28 the composition is skewed to polar residues; the sequence is KTPQSSTSSV. 2 MBT repeats span residues 33-131 and 139-240; these read FHWE…LQPP and SSWP…LQPP. Positions 253-281 are enriched in polar residues; that stretch reads TESSPSEASQHSMQSPQKTTLILPTQQVR. 2 disordered regions span residues 253–320 and 466–550; these read TESS…EKPL and PFSS…SSLN. Phosphoserine occurs at positions 256, 261, 267, 299, and 300. Residue Thr305 is modified to Phosphothreonine. Basic and acidic residues predominate over residues 476–495; the sequence is SSAEHDKNQSAKEDVTERQS. Ser499 bears the Phosphoserine mark. Thr503 carries the phosphothreonine modification. Position 511 is a phosphoserine (Ser511). Lys518 participates in a covalent cross-link: Glycyl lysine isopeptide (Lys-Gly) (interchain with G-Cter in SUMO2). A Phosphoserine modification is found at Ser522. Over residues 535–545 the composition is skewed to basic and acidic residues; sequence PKEENLSEDSK. Residue Lys536 forms a Glycyl lysine isopeptide (Lys-Gly) (interchain with G-Cter in SUMO2) linkage. 4 positions are modified to phosphoserine: Ser570, Ser583, Ser590, and Ser594. The segment covering 575 to 584 has biased composition (polar residues); the sequence is RSVPGTTSSP. Positions 575–594 are disordered; that stretch reads RSVPGTTSSPLVGDISPKSS. Glycyl lysine isopeptide (Lys-Gly) (interchain with G-Cter in SUMO2) cross-links involve residues Lys599 and Lys605. The 70-residue stretch at 631–700 folds into the SAM domain; sequence WSVDEVIQFM…IEKLKEGKYS (70 aa).

It belongs to the SCM family. As to expression, highly expressed in placenta, thymus and testis. Detected at lower levels in brain, liver, skeletal muscle, pancreas and ovary.

The protein localises to the nucleus. Functionally, putative Polycomb group (PcG) protein. PcG proteins act by forming multiprotein complexes, which are required to maintain the transcriptionally repressive state of homeotic genes throughout development. The protein is Sex comb on midleg-like protein 2 (SCML2) of Homo sapiens (Human).